The following is a 377-amino-acid chain: MKIDYYEALGVTRTADDKTLKAAFRKLAMQYHPDRNPDDPEAERKFKEIGEAYETLKDPQKRAAYDRFGHAAFENGGMGGGFGNGFGGAGGFADIFEDIFGEMMGGGRRRSNGGRERGADLRYNMEVTLEEAYAGKTAQIRVPTSITCDECSGSGAKPGSQPTTCTMCSGSGRVRAAQGFFSVERTCPGCNGRGQIIKDPCEKCHGQGRVTQERSLSVNIPAGIEDGTRIRLAGEGEAGLRGGPAGDLYIFLSVKPHEFFQRDGADLYCKVPISMTTAALGGQFEVSTLDGTQTRVKVPEGTQNGKQFRLKGKGMPVLRQSVTGDLYIQIDIETPQNLSKRQRELLEEFEKLSWQENSPKSAGLFSRMKEFFEGIGE.

A J domain is found at 4-69 (DYYEALGVTR…QKRAAYDRFG (66 aa)). The CR-type zinc-finger motif lies at 135–213 (GKTAQIRVPT…CHGQGRVTQE (79 aa)). Zn(2+) is bound by residues Cys148, Cys151, Cys165, Cys168, Cys187, Cys190, Cys201, and Cys204. 4 CXXCXGXG motif repeats span residues 148-155 (CDECSGSG), 165-172 (CTMCSGSG), 187-194 (CPGCNGRG), and 201-208 (CEKCHGQG).

It belongs to the DnaJ family. As to quaternary structure, homodimer. Zn(2+) serves as cofactor.

Its subcellular location is the cytoplasm. Functionally, participates actively in the response to hyperosmotic and heat shock by preventing the aggregation of stress-denatured proteins and by disaggregating proteins, also in an autonomous, DnaK-independent fashion. Unfolded proteins bind initially to DnaJ; upon interaction with the DnaJ-bound protein, DnaK hydrolyzes its bound ATP, resulting in the formation of a stable complex. GrpE releases ADP from DnaK; ATP binding to DnaK triggers the release of the substrate protein, thus completing the reaction cycle. Several rounds of ATP-dependent interactions between DnaJ, DnaK and GrpE are required for fully efficient folding. Also involved, together with DnaK and GrpE, in the DNA replication of plasmids through activation of initiation proteins. This Brucella ovis (strain ATCC 25840 / 63/290 / NCTC 10512) protein is Chaperone protein DnaJ.